We begin with the raw amino-acid sequence, 436 residues long: MKKTHITEQKFADLDLLPQVIEGLEKKGFDYCTPIQALALPVLLTGQDIAGQAQTGTGKTLAFLTATFNHLLKTPEHEGRKPNQPRAIIMAPTRELAIQIYNDADSLVASTGIKAALAYGGESYDKQLGKIEEGADILIGTTGRIIDFYKQKVFNLNHIQAVVLDEADRMFDLGFIKDIRFLFRRMPEPKDRLNMLFSATLSYRVQELAFEHMHNPEHVVVEPERKTGHRIQEELFYPSNEHKMALLQTLIEEEWPDRAIIFANTKHKCESVWGHLAADGHRVGLLTGDVPQKKREKILEQFTKGDVDLLVATDVAARGLHIPQVTHVFNFDLPDDCEDYVHRIGRTGRAGESGHSISFACEDYAINLPPIEEYIEHAIPMSDYDASALLEDLPAPMRLRTRNPQQRRSNNNGPRNGNRKPNQNRRPRQPRHNKEA.

Residues 9–37 carry the Q motif motif; it reads QKFADLDLLPQVIEGLEKKGFDYCTPIQA. The 180-residue stretch at 40–219 folds into the Helicase ATP-binding domain; the sequence is LPVLLTGQDI…FEHMHNPEHV (180 aa). 53–60 lines the ATP pocket; sequence AQTGTGKT. The DEAD box signature appears at 165-168; sequence DEAD. Residues 245–390 enclose the Helicase C-terminal domain; it reads ALLQTLIEEE…MSDYDASALL (146 aa). The disordered stretch occupies residues 398–436; the sequence is RLRTRNPQQRRSNNNGPRNGNRKPNQNRRPRQPRHNKEA. Residues 402-421 are compositionally biased toward low complexity; it reads RNPQQRRSNNNGPRNGNRKP. Basic residues predominate over residues 422–436; sequence NQNRRPRQPRHNKEA.

It belongs to the DEAD box helicase family. RhlB subfamily. In terms of assembly, component of the RNA degradosome, which is a multiprotein complex involved in RNA processing and mRNA degradation.

The protein localises to the cytoplasm. The catalysed reaction is ATP + H2O = ADP + phosphate + H(+). DEAD-box RNA helicase involved in RNA degradation. Has RNA-dependent ATPase activity and unwinds double-stranded RNA. In Vibrio atlanticus (strain LGP32) (Vibrio splendidus (strain Mel32)), this protein is ATP-dependent RNA helicase RhlB.